Reading from the N-terminus, the 278-residue chain is NADPH-dependent 7-cyano-7-deazaguanine reductase (278 aa).

Residue I87–S89 coordinates substrate. NADPH is bound at residue S89–K90. The Thioimide intermediate role is filled by C185. D192 acts as the Proton donor in catalysis. H224–E225 contacts substrate. R253 to G254 contacts NADPH. The segment at G255–Q278 is disordered. Polar residues predominate over residues Y261 to Q278.

Belongs to the GTP cyclohydrolase I family. QueF type 2 subfamily. As to quaternary structure, homodimer.

The protein localises to the cytoplasm. It catalyses the reaction 7-aminomethyl-7-carbaguanine + 2 NADP(+) = 7-cyano-7-deazaguanine + 2 NADPH + 3 H(+). The protein operates within tRNA modification; tRNA-queuosine biosynthesis. Catalyzes the NADPH-dependent reduction of 7-cyano-7-deazaguanine (preQ0) to 7-aminomethyl-7-deazaguanine (preQ1). This Coxiella burnetii (strain CbuK_Q154) (Coxiella burnetii (strain Q154)) protein is NADPH-dependent 7-cyano-7-deazaguanine reductase.